A 335-amino-acid polypeptide reads, in one-letter code: Nucleoid-associated protein YejK (335 aa).

It belongs to the YejK family.

Its subcellular location is the cytoplasm. The protein localises to the nucleoid. This Salmonella schwarzengrund (strain CVM19633) protein is Nucleoid-associated protein YejK.